The primary structure comprises 75 residues: Small ribosomal subunit protein bS21B (75 aa).

The span at 33-52 (RRSYEKPSERRAREKAEAVR) shows a compositional bias: basic and acidic residues. The tract at residues 33-75 (RRSYEKPSERRAREKAEAVRRARKLARKQAQREGLLPGKKRAA) is disordered.

It belongs to the bacterial ribosomal protein bS21 family.

The polypeptide is Small ribosomal subunit protein bS21B (Chelativorans sp. (strain BNC1)).